A 95-amino-acid polypeptide reads, in one-letter code: Aspartyl/glutamyl-tRNA(Asn/Gln) amidotransferase subunit C (95 aa).

Belongs to the GatC family. In terms of assembly, heterotrimer of A, B and C subunits.

The enzyme catalyses L-glutamyl-tRNA(Gln) + L-glutamine + ATP + H2O = L-glutaminyl-tRNA(Gln) + L-glutamate + ADP + phosphate + H(+). The catalysed reaction is L-aspartyl-tRNA(Asn) + L-glutamine + ATP + H2O = L-asparaginyl-tRNA(Asn) + L-glutamate + ADP + phosphate + 2 H(+). Allows the formation of correctly charged Asn-tRNA(Asn) or Gln-tRNA(Gln) through the transamidation of misacylated Asp-tRNA(Asn) or Glu-tRNA(Gln) in organisms which lack either or both of asparaginyl-tRNA or glutaminyl-tRNA synthetases. The reaction takes place in the presence of glutamine and ATP through an activated phospho-Asp-tRNA(Asn) or phospho-Glu-tRNA(Gln). This Trichlorobacter lovleyi (strain ATCC BAA-1151 / DSM 17278 / SZ) (Geobacter lovleyi) protein is Aspartyl/glutamyl-tRNA(Asn/Gln) amidotransferase subunit C.